Here is a 175-residue protein sequence, read N- to C-terminus: Nucleoplasmin-3 (175 aa).

Ala2 carries the post-translational modification N-acetylalanine. Ser16 is modified (phosphoserine). Arg27 carries the omega-N-methylarginine modification. 2 positions are modified to phosphoserine: Ser147 and Ser151.

The protein belongs to the nucleoplasmin family. Interacts with NPM (via N-terminus). Forms a pentamer with NPM at a ratio 4:1 (NPM3/NPM). Two pentamers form a decamer. Phosphorylated. Predominantly expressed in testis.

It localises to the nucleus. Its subcellular location is the nucleolus. Its function is as follows. Plays a role in the regulation of diverse cellular processes such as ribosome biogenesis, chromatin remodeling or protein chaperoning. Modulates the histone chaperone function and the RNA-binding activity of nucleolar phosphoprotein B23/NPM. Efficiently mediates chromatin remodeling when included in a pentamer containing NPM3 and NPM. This chain is Nucleoplasmin-3 (Npm3), found in Mus musculus (Mouse).